Reading from the N-terminus, the 233-residue chain is MGEPQQVSALPPPPMQYIKEYTDENIQEGLAPKPPPPIKDSYMMFGNQFQCDDLIIRPLESQGIERLHPMQFDHKKELRKLNMSILINFLDLLDILIRSPGSIKREEKLEDLKLLFVHVHHLINEYRPHQARETLRVMMEVQKRQRLETAERFQKHLERVIEMIQNCLASLPDDLPHSEAGMRVKTEPMDADDSNNCTGQNEHQRENSGHRRDQIIEKDAALCVLIDEMNERP.

Residue lysine 185 forms a Glycyl lysine isopeptide (Lys-Gly) (interchain with G-Cter in SUMO1); alternate linkage. Lysine 185 is covalently cross-linked (Glycyl lysine isopeptide (Lys-Gly) (interchain with G-Cter in SUMO2); alternate). A disordered region spans residues 187 to 213 (EPMDADDSNNCTGQNEHQRENSGHRRD). Serine 194 is modified (phosphoserine). Residues 202–213 (EHQRENSGHRRD) are compositionally biased toward basic and acidic residues.

It belongs to the Mediator complex subunit 7 family. Component of the Mediator complex, which is composed of MED1, MED4, MED6, MED7, MED8, MED9, MED10, MED11, MED12, MED13, MED13L, MED14, MED15, MED16, MED17, MED18, MED19, MED20, MED21, MED22, MED23, MED24, MED25, MED26, MED27, MED29, MED30, MED31, CCNC, CDK8 and CDC2L6/CDK11. The MED12, MED13, CCNC and CDK8 subunits form a distinct module termed the CDK8 module. Mediator containing the CDK8 module is less active than Mediator lacking this module in supporting transcriptional activation. Individual preparations of the Mediator complex lacking one or more distinct subunits have been variously termed ARC, CRSP, DRIP, PC2, SMCC and TRAP. In terms of processing, constitutively sumoylated.

The protein resides in the nucleus. Functionally, component of the Mediator complex, a coactivator involved in the regulated transcription of nearly all RNA polymerase II-dependent genes. Mediator functions as a bridge to convey information from gene-specific regulatory proteins to the basal RNA polymerase II transcription machinery. Mediator is recruited to promoters by direct interactions with regulatory proteins and serves as a scaffold for the assembly of a functional preinitiation complex with RNA polymerase II and the general transcription factors. The sequence is that of Mediator of RNA polymerase II transcription subunit 7 (MED7) from Homo sapiens (Human).